A 1053-amino-acid chain; its full sequence is Focal adhesion kinase 1 (1053 aa).

Positions 1–27 are disordered; that stretch reads MAAAYLDPNLNHTPSSSAKTHLGTGME. The segment covering 10 to 19 has biased composition (polar residues); the sequence is LNHTPSSSAK. An FERM domain is found at 35-355; sequence RVLKVFHYFE…GYCRLVNGAT (321 aa). The residue at position 397 (tyrosine 397) is a Phosphotyrosine; by autocatalysis. Position 407 is a phosphotyrosine (tyrosine 407). Positions 422–680 constitute a Protein kinase domain; that stretch reads IELGRCIGEG…ELKAQLSTIL (259 aa). Residues 428-434, lysine 454, and 500-502 each bind ATP; these read IGEGQFG and ELC. Aspartate 546 functions as the Proton acceptor in the catalytic mechanism. 2 positions are modified to phosphotyrosine; by SRC: tyrosine 576 and tyrosine 577. The segment covering 686–697 has biased composition (basic and acidic residues); it reads QQEERMRMESRR. Disordered stretches follow at residues 686–741 and 843–892; these read QQEE…QPNH and RGSI…LASL. Residue tyrosine 863 is modified to Phosphotyrosine. A Phosphoserine modification is found at serine 911. Tyrosine 926 carries the phosphotyrosine modification.

It belongs to the protein kinase superfamily. Tyr protein kinase family. FAK subfamily. As to quaternary structure, interacts with ARHGAP26, GRB7, DCC, PIK3R1, PXN and SRC. Interacts with the ARP2/3 complex. Post-translationally, phosphorylated on tyrosine residues upon activation, e.g. upon integrin signaling. Tyr-397 is the major autophosphorylation site, but other kinases can also phosphorylate this residue. Phosphorylation at Tyr-397 promotes interaction with SRC and SRC family members, leading to phosphorylation at Tyr-576, Tyr-577 and at additional tyrosine residues. Isoform 2 is phosphorylated on serine or threonine residues, but apparently not on tyrosine residues.

The protein localises to the cell junction. It is found in the focal adhesion. Its subcellular location is the cell membrane. The protein resides in the cytoplasm. It localises to the perinuclear region. The protein localises to the cell cortex. It is found in the cytoskeleton. Its subcellular location is the microtubule organizing center. The protein resides in the centrosome. It localises to the nucleus. The protein localises to the cilium basal body. The enzyme catalyses L-tyrosyl-[protein] + ATP = O-phospho-L-tyrosyl-[protein] + ADP + H(+). Subject to autoinhibition, mediated by interactions between the FERM domain and the kinase domain. Activated by autophosphorylation at Tyr-397. This promotes interaction with SRC and phosphorylation at Tyr-576 and Tyr-577 in the kinase activation loop. Phosphorylation at Tyr-576 and Tyr-577 is required for maximal kinase activity. Inhibited by TAE226. In terms of biological role, non-receptor protein-tyrosine kinase that plays an essential role in regulating cell migration, adhesion, spreading, reorganization of the actin cytoskeleton, formation and disassembly of focal adhesions and cell protrusions, cell cycle progression, cell proliferation and apoptosis. Required for early embryonic development, embryonic angiogenesis, normal cardiomyocyte migration and proliferation, and normal heart development. Regulates axon growth and neuronal cell migration, axon branching and synapse formation; required for normal development of the nervous system. Plays a role in osteogenesis and differentiation of osteoblasts. Functions in integrin signal transduction, but also in signaling downstream of numerous growth factor receptors, G-protein coupled receptors (GPCR), ephrin receptors, netrin receptors and LDL receptors. Forms multisubunit signaling complexes with SRC and SRC family members upon activation; this leads to the phosphorylation of additional tyrosine residues, creating binding sites for scaffold proteins, effectors and substrates. Regulates numerous signaling pathways. Promotes activation of phosphatidylinositol 3-kinase and the AKT1 signaling cascade. Promotes activation of MAPK1/ERK2, MAPK3/ERK1 and the MAP kinase signaling cascade. Promotes localized and transient activation of guanine nucleotide exchange factors (GEFs) and GTPase-activating proteins (GAPs), and thereby modulates the activity of Rho family GTPases. Signaling via CAS family members mediates activation of RAC1. Regulates P53/TP53 activity and stability. Phosphorylates SRC; this increases SRC kinase activity. Isoform 2 (FRNK) does not contain a kinase domain and inhibits PTK2/FAK1 phosphorylation and signaling. This Gallus gallus (Chicken) protein is Focal adhesion kinase 1 (PTK2).